The sequence spans 169 residues: Ribosome maturation factor RimP (169 aa).

The protein belongs to the RimP family.

The protein resides in the cytoplasm. In terms of biological role, required for maturation of 30S ribosomal subunits. This chain is Ribosome maturation factor RimP, found in Coprothermobacter proteolyticus (strain ATCC 35245 / DSM 5265 / OCM 4 / BT).